We begin with the raw amino-acid sequence, 60 residues long: Large ribosomal subunit protein bL32 (60 aa).

It belongs to the bacterial ribosomal protein bL32 family.

The sequence is that of Large ribosomal subunit protein bL32 from Paramagnetospirillum magneticum (strain ATCC 700264 / AMB-1) (Magnetospirillum magneticum).